Consider the following 376-residue polypeptide: Glutamate 5-kinase (376 aa).

K18 is an ATP binding site. Substrate-binding residues include S58, D145, and N157. Residues 177 to 178 and 218 to 224 contribute to the ATP site; these read SD and TGGMASK. In terms of domain architecture, PUA spans 280–358; sequence TGALTLDAGA…SELPGELRRP (79 aa).

This sequence belongs to the glutamate 5-kinase family.

Its subcellular location is the cytoplasm. The enzyme catalyses L-glutamate + ATP = L-glutamyl 5-phosphate + ADP. Its pathway is amino-acid biosynthesis; L-proline biosynthesis; L-glutamate 5-semialdehyde from L-glutamate: step 1/2. In terms of biological role, catalyzes the transfer of a phosphate group to glutamate to form L-glutamate 5-phosphate. The sequence is that of Glutamate 5-kinase from Mycobacterium tuberculosis (strain CDC 1551 / Oshkosh).